Here is a 37-residue protein sequence, read N- to C-terminus: Large ribosomal subunit protein bL36 (37 aa).

The protein belongs to the bacterial ribosomal protein bL36 family.

This chain is Large ribosomal subunit protein bL36, found in Maridesulfovibrio salexigens (strain ATCC 14822 / DSM 2638 / NCIMB 8403 / VKM B-1763) (Desulfovibrio salexigens).